Reading from the N-terminus, the 130-residue chain is Small ribosomal subunit protein uS8 (130 aa).

Belongs to the universal ribosomal protein uS8 family. In terms of assembly, part of the 30S ribosomal subunit. Contacts proteins S5 and S12.

Functionally, one of the primary rRNA binding proteins, it binds directly to 16S rRNA central domain where it helps coordinate assembly of the platform of the 30S subunit. The protein is Small ribosomal subunit protein uS8 of Neisseria meningitidis serogroup C (strain 053442).